The chain runs to 191 residues: Photosystem I assembly protein Ycf4 (191 aa).

The next 2 membrane-spanning stretches (helical) occupy residues 33–53 (LLAV…LSSY) and 74–94 (LVMG…WAMI).

Belongs to the Ycf4 family.

The protein resides in the cellular thylakoid membrane. Seems to be required for the assembly of the photosystem I complex. This is Photosystem I assembly protein Ycf4 from Prochlorococcus marinus (strain MIT 9303).